Reading from the N-terminus, the 510-residue chain is NAD(P)H-quinone oxidoreductase subunit 2, chloroplastic (510 aa).

The next 11 membrane-spanning stretches (helical) occupy residues 24–44 (LLLF…GLIL), 59–79 (WFYF…LFRW), 99–119 (IFQF…VEYI), 124–144 (MAIT…MFLC), 149–169 (LITI…LSGY), 183–203 (YLLM…WLYG), 295–315 (WHLL…LIAI), 323–343 (MLAY…IVGD), 347–367 (GYAS…GTFA), 395–415 (ALSS…AGFF), and 418–438 (LHLF…IGLL).

Belongs to the complex I subunit 2 family. NDH is composed of at least 16 different subunits, 5 of which are encoded in the nucleus.

It localises to the plastid. Its subcellular location is the chloroplast thylakoid membrane. It catalyses the reaction a plastoquinone + NADH + (n+1) H(+)(in) = a plastoquinol + NAD(+) + n H(+)(out). The catalysed reaction is a plastoquinone + NADPH + (n+1) H(+)(in) = a plastoquinol + NADP(+) + n H(+)(out). NDH shuttles electrons from NAD(P)H:plastoquinone, via FMN and iron-sulfur (Fe-S) centers, to quinones in the photosynthetic chain and possibly in a chloroplast respiratory chain. The immediate electron acceptor for the enzyme in this species is believed to be plastoquinone. Couples the redox reaction to proton translocation, and thus conserves the redox energy in a proton gradient. In Maianthemum racemosum (False Solomon's-seal), this protein is NAD(P)H-quinone oxidoreductase subunit 2, chloroplastic.